A 1021-amino-acid chain; its full sequence is Multidrug resistance protein MdtC (1021 aa).

The Cytoplasmic segment spans residues 1-6; it reads MKFFAL. A helical transmembrane segment spans residues 7-29; it reads FIYRPVATILLSVAITLCGILGF. At 30–335 the chain is on the periplasmic side; it reads RMLPVAPLPQ…TIRASLEEVE (306 aa). A helical membrane pass occupies residues 336–353; it reads QTLIISVALVILVVFLFL. Residues 354-359 lie on the Cytoplasmic side of the membrane; the sequence is RSGRAT. The helical transmembrane segment at 360–379 threads the bilayer; the sequence is IIPAVAVPVSLIGTFAAMYL. At 380 to 388 the chain is on the periplasmic side; it reads CGFSLNNLS. The chain crosses the membrane as a helical span at residues 389–411; sequence LMALTIATGFVVDDAIVVLENIA. At 412 to 430 the chain is on the cytoplasmic side; sequence RHLEAGMKPLQAALQGTRE. A helical transmembrane segment spans residues 431 to 453; sequence VGFTVLSMSLSLVAVFLPLLLMG. Residues 454–467 are Periplasmic-facing; sequence GLPGRLLREFAVTL. Residues 468–490 form a helical membrane-spanning segment; the sequence is SVAIGISLLVSLTLTPMMCGWML. Residues 491-848 lie on the Cytoplasmic side of the membrane; that stretch reads KASKPREQKR…QVFQETMNSQ (358 aa). The chain crosses the membrane as a helical span at residues 849–871; the sequence is VILIIAAIATVYIVLGILYESYV. Residues 872–890 are Periplasmic-facing; it reads HPLTILSTLPSAGVGALLA. The helical transmembrane segment at 891-913 threads the bilayer; the sequence is LELFNAPFSLIALIGIMLLIGIV. Topologically, residues 914-943 are cytoplasmic; the sequence is KKNAIMMVDFALEAQRHGNLTPQEAIFQAC. The chain crosses the membrane as a helical span at residues 944–966; it reads LLRFRPIMMTTLAALFGALPLVL. The Periplasmic segment spans residues 967 to 980; sequence SGGDGSELRQPLEI. A helical transmembrane segment spans residues 981–1003; that stretch reads TIVGGLVMSQLLTLYTTPVVYLF. At 1004–1021 the chain is on the cytoplasmic side; that stretch reads FDRLRLRFSRKPKQTVTE.

This sequence belongs to the resistance-nodulation-cell division (RND) (TC 2.A.6) family. MdtC subfamily. In terms of assembly, part of a tripartite efflux system composed of MdtA, MdtB and MdtC. MdtC forms a heteromultimer with MdtB.

It is found in the cell inner membrane. This is Multidrug resistance protein MdtC from Shigella flexneri.